Here is a 319-residue protein sequence, read N- to C-terminus: NADH-quinone oxidoreductase subunit H 1 (319 aa).

The next 8 membrane-spanning stretches (helical) occupy residues 8–28 (LFNIFGILGTLLTLAALLIWI), 74–94 (LVFILAPTVVVIATLLAFAVI), 107–127 (IGLLFFLAMSSLSVYSVVLGG), 147–167 (LSYEVFMGLSLMGVVMLAGTF), 179–199 (MWFCIPQFLGLVVFLIAGIAE), 230–250 (FFVGEYLAILLISALIVTLFF), 258–278 (LPPLVWFFIKFSFFVLFFILL), and 297–317 (LMLPLALLNLVITGAVVLALD).

It belongs to the complex I subunit 1 family. In terms of assembly, NDH-1 is composed of 14 different subunits. Subunits NuoA, H, J, K, L, M, N constitute the membrane sector of the complex.

It localises to the cell inner membrane. It carries out the reaction a quinone + NADH + 5 H(+)(in) = a quinol + NAD(+) + 4 H(+)(out). Functionally, NDH-1 shuttles electrons from NADH, via FMN and iron-sulfur (Fe-S) centers, to quinones in the respiratory chain. The immediate electron acceptor for the enzyme in this species is believed to be ubiquinone. Couples the redox reaction to proton translocation (for every two electrons transferred, four hydrogen ions are translocated across the cytoplasmic membrane), and thus conserves the redox energy in a proton gradient. This subunit may bind ubiquinone. The polypeptide is NADH-quinone oxidoreductase subunit H 1 (Nitrosococcus oceani (strain ATCC 19707 / BCRC 17464 / JCM 30415 / NCIMB 11848 / C-107)).